The chain runs to 417 residues: Serine hydroxymethyltransferase (417 aa).

(6S)-5,6,7,8-tetrahydrofolate-binding positions include Leu-121 and 125 to 127 (GHL). N6-(pyridoxal phosphate)lysine is present on Lys-229. A (6S)-5,6,7,8-tetrahydrofolate-binding site is contributed by 355-357 (SPF).

It belongs to the SHMT family. In terms of assembly, homodimer. Pyridoxal 5'-phosphate is required as a cofactor.

It localises to the cytoplasm. It catalyses the reaction (6R)-5,10-methylene-5,6,7,8-tetrahydrofolate + glycine + H2O = (6S)-5,6,7,8-tetrahydrofolate + L-serine. Its pathway is one-carbon metabolism; tetrahydrofolate interconversion. It participates in amino-acid biosynthesis; glycine biosynthesis; glycine from L-serine: step 1/1. In terms of biological role, catalyzes the reversible interconversion of serine and glycine with tetrahydrofolate (THF) serving as the one-carbon carrier. This reaction serves as the major source of one-carbon groups required for the biosynthesis of purines, thymidylate, methionine, and other important biomolecules. Also exhibits THF-independent aldolase activity toward beta-hydroxyamino acids, producing glycine and aldehydes, via a retro-aldol mechanism. The protein is Serine hydroxymethyltransferase of Xanthomonas euvesicatoria pv. vesicatoria (strain 85-10) (Xanthomonas campestris pv. vesicatoria).